A 194-amino-acid chain; its full sequence is Clathrin light chain (194 aa).

Positions 44-156 are disordered; sequence TTFDNSNNNN…TDSTSGNTTH (113 aa). The segment covering 48–65 has biased composition (low complexity); the sequence is NSNNNNNNNNHNNNSYNS. 2 stretches are compositionally biased toward basic and acidic residues: residues 89–115 and 124–146; these read EYLE…KIAE and YSER…KSLE. A required for binding clathrin heavy chain, localization to punctae, and for cytokinesis and fruiting body development region spans residues 124 to 194; sequence YSEREAKKKT…LIRLKNQPIV (71 aa). The span at 147–156 shows a compositional bias: polar residues; sequence TDSTSGNTTH.

Belongs to the clathrin light chain family. In terms of assembly, clathrin coats are formed from molecules containing 3 heavy chains and 3 light chains.

The protein resides in the cytoplasmic vesicle membrane. Its subcellular location is the membrane. It is found in the coated pit. In terms of biological role, clathrin is the major protein of the polyhedral coat of coated pits and vesicles. This is Clathrin light chain (clc) from Dictyostelium discoideum (Social amoeba).